A 227-amino-acid polypeptide reads, in one-letter code: Probable methylthioribulose-1-phosphate dehydratase (227 aa).

Residue Cys-87 participates in substrate binding. Zn(2+)-binding residues include His-105 and His-107. Glu-129 acts as the Proton donor/acceptor in catalysis. His-185 is a Zn(2+) binding site.

Belongs to the aldolase class II family. MtnB subfamily. Zn(2+) serves as cofactor.

The protein localises to the cytoplasm. The enzyme catalyses 5-(methylsulfanyl)-D-ribulose 1-phosphate = 5-methylsulfanyl-2,3-dioxopentyl phosphate + H2O. The protein operates within amino-acid biosynthesis; L-methionine biosynthesis via salvage pathway; L-methionine from S-methyl-5-thio-alpha-D-ribose 1-phosphate: step 2/6. Functionally, catalyzes the dehydration of methylthioribulose-1-phosphate (MTRu-1-P) into 2,3-diketo-5-methylthiopentyl-1-phosphate (DK-MTP-1-P). In Drosophila mojavensis (Fruit fly), this protein is Probable methylthioribulose-1-phosphate dehydratase.